Reading from the N-terminus, the 249-residue chain is Probable transcriptional regulatory protein CYB_1350 (249 aa).

Belongs to the TACO1 family.

The protein resides in the cytoplasm. The sequence is that of Probable transcriptional regulatory protein CYB_1350 from Synechococcus sp. (strain JA-2-3B'a(2-13)) (Cyanobacteria bacterium Yellowstone B-Prime).